The following is an 874-amino-acid chain: Bifunctional uridylyltransferase/uridylyl-removing enzyme (874 aa).

A uridylyltransferase region spans residues 1–332 (MPLQSPLTFS…NGGATENAEI (332 aa)). A uridylyl-removing region spans residues 333 to 692 (LDADFQRRGS…ISKKATRGGT (360 aa)). In terms of domain architecture, HD spans 451 to 573 (VDEHSIRLLK…VRDEESLEYL (123 aa)). 2 consecutive ACT domains span residues 693 to 777 (EVFV…RTPN) and 800 to 874 (LMEF…AVTA).

It belongs to the GlnD family. Requires Mg(2+) as cofactor.

The enzyme catalyses [protein-PII]-L-tyrosine + UTP = [protein-PII]-uridylyl-L-tyrosine + diphosphate. The catalysed reaction is [protein-PII]-uridylyl-L-tyrosine + H2O = [protein-PII]-L-tyrosine + UMP + H(+). With respect to regulation, uridylyltransferase (UTase) activity is inhibited by glutamine, while glutamine activates uridylyl-removing (UR) activity. Functionally, modifies, by uridylylation and deuridylylation, the PII regulatory proteins (GlnB and homologs), in response to the nitrogen status of the cell that GlnD senses through the glutamine level. Under low glutamine levels, catalyzes the conversion of the PII proteins and UTP to PII-UMP and PPi, while under higher glutamine levels, GlnD hydrolyzes PII-UMP to PII and UMP (deuridylylation). Thus, controls uridylylation state and activity of the PII proteins, and plays an important role in the regulation of nitrogen assimilation and metabolism. This chain is Bifunctional uridylyltransferase/uridylyl-removing enzyme, found in Vibrio parahaemolyticus serotype O3:K6 (strain RIMD 2210633).